The sequence spans 299 residues: Bifunctional phosphoglucose/phosphomannose isomerase (299 aa).

An SIS domain is found at Asp27–Lys177. 6 residues coordinate D-fructose 6-phosphate: Gly44, Ser45, Ser84, Ser86, Thr89, and Arg132. Glu200 acts as the Proton acceptor in catalysis. 2 residues coordinate D-fructose 6-phosphate: His216 and Lys295. The Proton donor role is filled by His216. The active-site Proton acceptor is Lys295.

It belongs to the PGI/PMI family. As to quaternary structure, homodimer.

The catalysed reaction is alpha-D-glucose 6-phosphate = beta-D-fructose 6-phosphate. It catalyses the reaction D-mannose 6-phosphate = D-fructose 6-phosphate. With respect to regulation, presence or absence of metal ions or EDTA does not significantly affect the phosphoglucose isomerase activity. In terms of biological role, dual specificity isomerase that catalyzes the isomerization of both glucose-6-phosphate and mannose-6-phosphate to fructose-6-phosphate with nearly similar catalytic efficiency. Also catalyzes the epimerization of mannose 6-phosphate to glucose 6-phosphate but the rate of epimerization reaction is 20-fold lower than that of isomerization reaction. This Pyrobaculum calidifontis (strain DSM 21063 / JCM 11548 / VA1) protein is Bifunctional phosphoglucose/phosphomannose isomerase.